A 90-amino-acid polypeptide reads, in one-letter code: MAEFEDTTVFNFGSQKPENVRSMLKLVYEALEEKGYNPINQIVGYLISGDPAYIPRLNDARNLIRRFERDEIVEELVKDYLSDHKTDQKK.

It belongs to the UPF0297 family.

The chain is UPF0297 protein OEOE_1166 from Oenococcus oeni (strain ATCC BAA-331 / PSU-1).